A 229-amino-acid polypeptide reads, in one-letter code: Ribulose-phosphate 3-epimerase (229 aa).

Serine 12 is a binding site for substrate. The a divalent metal cation site is built by histidine 37, aspartate 39, and histidine 70. The Proton acceptor role is filled by aspartate 39. Substrate contacts are provided by residues histidine 70, 146–149 (GFTG), 181–183 (DGG), and 203–204 (AS). Aspartate 181 lines the a divalent metal cation pocket. The Proton donor role is filled by aspartate 181.

This sequence belongs to the ribulose-phosphate 3-epimerase family. The cofactor is a divalent metal cation.

The enzyme catalyses D-ribulose 5-phosphate = D-xylulose 5-phosphate. The protein operates within carbohydrate degradation. In terms of biological role, catalyzes the reversible epimerization of D-ribulose 5-phosphate to D-xylulose 5-phosphate. In Chlamydia pneumoniae (Chlamydophila pneumoniae), this protein is Ribulose-phosphate 3-epimerase.